A 494-amino-acid chain; its full sequence is Flavin-containing monooxygenase ustF2 (494 aa).

The N-terminal stretch at 1 to 21 (MANPQTTRVAVVGAGISGVLA) is a signal peptide. FAD is bound at residue 13–18 (GAGISG). The tract at residues 73-93 (EPSYPAMKPSKADPPATNEQE) is disordered. An NADP(+)-binding site is contributed by 250 to 255 (GGGVSS). N-linked (GlcNAc...) asparagine glycosylation is present at asparagine 459.

It belongs to the FMO family.

It functions in the pathway mycotoxin biosynthesis. Flavin-containing monooxygenase; part of the gene cluster that mediates the biosynthesis of the secondary metabolite ustiloxin B, an antimitotic tetrapeptide. First, ustA is processed by the subtilisin-like endoprotease Kex2 that is outside the ustiloxin B gene cluster, at the C-terminal side of Arg-Lys, after transfer to Golgi apparatus through the endoplasmic reticulum (ER). Cleavage by KEX2 generates 16 peptides YAIG-I to YAIG-XVI. To process the precursor peptide further, at least two peptidases are necessary to cleave the N-terminal and C-terminal sides of the Tyr-Ala-Ile-Gly core peptide which serves as backbone for the synthesis of ustiloxin B, through cyclization and modification of the tyrosine with a non-protein coding amino acid, norvaline. One of the two peptidases must be the serine peptidase ustP; and the other pepdidase is probably ustH. Macrocyclization of the core peptide derived from ustA requires the tyrosinase ustQ, as well as the homologous oxidases ustYa and ustYb, and leads to the production of the first cyclization product N-desmethylustiloxin F. For the formation of N-desmethylustiloxin F, three oxidation steps are required, hydroxylation at the benzylic position, hydroxylation at either the aromatic ring of Tyr or beta-position of Ile, and oxidative cyclization. UstQ may catalyze the oxidation of a phenol moiety, whereas the ustYa and ustYb are most likely responsible for the remaining two-step oxidations. N-desmethylustiloxin F is then methylated by ustM to yield ustiloxin F which in turn substrate of the cytochrome P450 monooxygenase ustC which catalyzes the formation of S-deoxyustiloxin H. The flavoprotein monooxygenases ustF1 and ustF2 then participate in the modification of the side chain of S-deoxyustiloxin H, leading to the synthesis of an oxime intermediate, via ustiloxin H. Finally, carboxylative dehydration performed by the cysteine desulfurase-like protein ustD yields ustiloxin B. This chain is Flavin-containing monooxygenase ustF2, found in Aspergillus flavus (strain ATCC 200026 / FGSC A1120 / IAM 13836 / NRRL 3357 / JCM 12722 / SRRC 167).